Reading from the N-terminus, the 273-residue chain is Dermonecrotic toxin LspiSicTox-betaIE1ii (273 aa).

The active site involves H5. Mg(2+) is bound by residues E25 and D27. H41 serves as the catalytic Nucleophile. Disulfide bonds link C45–C51 and C47–C189. A Mg(2+)-binding site is contributed by D85.

Belongs to the arthropod phospholipase D family. Class II subfamily. The cofactor is Mg(2+). As to expression, expressed by the venom gland.

Its subcellular location is the secreted. It catalyses the reaction an N-(acyl)-sphingosylphosphocholine = an N-(acyl)-sphingosyl-1,3-cyclic phosphate + choline. The catalysed reaction is an N-(acyl)-sphingosylphosphoethanolamine = an N-(acyl)-sphingosyl-1,3-cyclic phosphate + ethanolamine. It carries out the reaction a 1-acyl-sn-glycero-3-phosphocholine = a 1-acyl-sn-glycero-2,3-cyclic phosphate + choline. The enzyme catalyses a 1-acyl-sn-glycero-3-phosphoethanolamine = a 1-acyl-sn-glycero-2,3-cyclic phosphate + ethanolamine. Functionally, dermonecrotic toxins cleave the phosphodiester linkage between the phosphate and headgroup of certain phospholipids (sphingolipid and lysolipid substrates), forming an alcohol (often choline) and a cyclic phosphate. This toxin acts on sphingomyelin (SM). It may also act on ceramide phosphoethanolamine (CPE), lysophosphatidylcholine (LPC) and lysophosphatidylethanolamine (LPE), but not on lysophosphatidylserine (LPS), and lysophosphatidylglycerol (LPG). It acts by transphosphatidylation, releasing exclusively cyclic phosphate products as second products. Induces dermonecrosis, hemolysis, increased vascular permeability, edema, inflammatory response, and platelet aggregation. This Loxosceles spinulosa (Recluse spider) protein is Dermonecrotic toxin LspiSicTox-betaIE1ii.